The primary structure comprises 879 residues: Beta-alanyl-bioamine nonribosomal peptide synthetase ebony (879 aa).

An adenylation region spans residues Phe26–Lys540. Residues Glu573–His650 form the Carrier domain. Ser611 is subject to O-(pantetheine 4'-phosphoryl)serine. The tract at residues Leu666–Gln679 is condensation. Glu696 contributes to the dopamine binding site. Residue Glu696 participates in histamine binding. Beta-alanine-binding residues include Thr825 and Asn827.

It belongs to the NRP synthetase family. The cofactor is pantetheine 4'-phosphate. Mg(2+) serves as cofactor. As to expression, expressed in the optic neuropils in the lamina and in distinct cells at the distal border of the medulla cortex (at protein level). Expressed in the protocerebrum and thoracic ganglia (at protein level). Expressed in antennal lobes, antennal nerves and subesophagic ganglion (at protein level). Specifically, expressed in epithelial glial cells of the medulla that surround the synaptic cleft of photoreceptor axonal endings (at protein level). Expressed in some cells in the cuticle.

It localises to the cytoplasm. The enzyme catalyses histamine + beta-alanine + ATP = carcinine + AMP + diphosphate + H(+). It catalyses the reaction beta-alanine + ATP + H(+) = beta-alanyl-5'-AMP + diphosphate. It carries out the reaction beta-alanyl-5'-AMP + holo-[peptidyl-carrier protein] = beta-alanyl-[peptidyl-carrier protein] + AMP + H(+). The catalysed reaction is beta-alanyl-[peptidyl-carrier protein] + histamine = carcinine + holo-[peptidyl-carrier protein] + H(+). The enzyme catalyses dopamine + beta-alanine + ATP = beta-alanyl-dopamine + AMP + diphosphate + H(+). It catalyses the reaction beta-alanyl-[peptidyl-carrier protein] + dopamine = beta-alanyl-dopamine + holo-[peptidyl-carrier protein] + H(+). Nonribosomal peptide synthase which is required for the regulation of histamine and dopamine levels in various tissues through their condensation with beta-alanine. In epithelial glial cells, plays an essential role in the inactivation of histamine, the main neurotransmitter in the optical nerve system, by catalyzing the conversion of histamine into carcinine. In the cuticle, catalyzes the condensation of beta-alanine with dopamine to form beta-alanyl-dopamine (NBAD), a metabolite involved in the pigmentation and sclerotization of the insect cuticle. Also, regulates the cuticular hydrocarbon composition in females. Acts downstream of the body clock to regulate circadian behavioral rhythms. Can also condense beta-alanine with biogenic amines tyramine, octopamine, and serotonin in vitro. This is Beta-alanyl-bioamine nonribosomal peptide synthetase ebony from Drosophila melanogaster (Fruit fly).